The following is a 384-amino-acid chain: Guanine nucleotide-binding protein alpha-1 subunit (384 aa).

Residue G2 is the site of N-myristoyl glycine attachment. C5 carries the S-palmitoyl cysteine lipid modification. Residues 38–384 form the G-alpha domain; sequence HIRKLLLLGA…RRNLFEAGLL (347 aa). The interval 41 to 54 is G1 motif; it reads KLLLLGAGESGKST. GTP-binding residues include E49, S50, G51, K52, S53, T54, D163, L188, T194, G222, N288, K289, D291, and A356. S53 is a binding site for Mg(2+). Positions 186 to 194 are G2 motif; that stretch reads DVLLARVRT. T194 is a Mg(2+) binding site. A G3 motif region spans residues 215-224; sequence YRLFDVGGQR. The interval 284–291 is G4 motif; the sequence is MLFLNKFD. Residues 354–359 form a G5 motif region; the sequence is TTALDQ.

This sequence belongs to the G-alpha family. In terms of assembly, g proteins are composed of 3 units; alpha, beta and gamma. The alpha chain contains the guanine nucleotide binding site. Mg(2+) is required as a cofactor.

Functionally, guanine nucleotide-binding proteins (G proteins) are involved as modulators or transducers in various transmembrane signaling systems. The polypeptide is Guanine nucleotide-binding protein alpha-1 subunit (GPA1) (Pisum sativum (Garden pea)).